The chain runs to 375 residues: CD2 homolog (375 aa).

An N-terminal signal peptide occupies residues Met-1–Ser-16. Over Ile-17–Tyr-207 the chain is Extracellular. Asn-24, Asn-80, Asn-105, Asn-122, Asn-134, Asn-145, Asn-168, Asn-176, and Asn-183 each carry an N-linked (GlcNAc...) asparagine; by host glycan. Intrachain disulfides connect Cys-123-Cys-190 and Cys-130-Cys-173. A helical membrane pass occupies residues Met-208–Ile-228. The Cytoplasmic portion of the chain corresponds to Thr-229 to Ile-375. Positions Glu-242 to Pro-278 are disordered. Basic and acidic residues predominate over residues Gln-256–Pro-270. Repeat copies occupy residues Lys-305–Pro-310, Lys-311–Pro-316, Lys-317–Pro-322, Lys-323–Pro-328, and Lys-329–Ser-334. A 5 X 6 AA tandem repeats of K-[LP]-C-[PRS]-[PS]-[PS] region spans residues Lys-305–Ser-334. Residues Lys-323–Pro-350 are disordered. Positions Pro-332–Pro-346 are enriched in low complexity.

This sequence belongs to the asfivirus CD2 homolog protein family. As to quaternary structure, both glycosylated and nonglycosylated forms interact (via C-terminus) with the host AP-1 complex. Post-translationally, cleaved into two fragments of 63 kDa and 26 kDa containing respectively the glycosylated N-terminus and the nonglycosylated C-terminus. A full-length 89-kDa glycosylated form also exists.

Its subcellular location is the host membrane. The protein localises to the virion membrane. It is found in the host Golgi apparatus. Functionally, may play an immunosuppressive role by inhibiting lymphocyte proliferation and subsequently facilitating viral replication and generalization of infection. Responsible for viral hemadsorption, which may help viral spread. Increases virus replication in the tick vector at the step of virus uptake or replication in the tick gut. May play a role in the host Golgi reorganization to yield viral factories. May play a role in host cell penetration. This chain is CD2 homolog, found in Ornithodoros (relapsing fever ticks).